We begin with the raw amino-acid sequence, 560 residues long: Membrane protein insertase YidC (560 aa).

Residues 1–21 (MDIKRTILIAALAVVSYVMVL) form a helical membrane-spanning segment. The tract at residues 42 to 66 (VAPGLPDGVPAGNNGASADVPSANA) is disordered. 5 helical membrane-spanning segments follow: residues 341-361 (LELT…FWLL), 367-387 (LLGN…GLFF), 437-457 (LGGC…YWVL), 468-488 (WMLW…PIIM), and 515-535 (PIIF…YWVV).

This sequence belongs to the OXA1/ALB3/YidC family. Type 1 subfamily. Interacts with the Sec translocase complex via SecD. Specifically interacts with transmembrane segments of nascent integral membrane proteins during membrane integration.

Its subcellular location is the cell inner membrane. Required for the insertion and/or proper folding and/or complex formation of integral membrane proteins into the membrane. Involved in integration of membrane proteins that insert both dependently and independently of the Sec translocase complex, as well as at least some lipoproteins. Aids folding of multispanning membrane proteins. In Pseudomonas putida (strain GB-1), this protein is Membrane protein insertase YidC.